Reading from the N-terminus, the 385-residue chain is Transcription termination factor 2, mitochondrial (385 aa).

The N-terminal 35 residues, Met-1–Tyr-35, are a transit peptide targeting the mitochondrion.

The protein belongs to the mTERF family. Monomer.

The protein localises to the mitochondrion matrix. Its subcellular location is the mitochondrion nucleoid. In terms of biological role, binds mitochondrial DNA and plays a role in the regulation of transcription of mitochondrial mRNA and rRNA species. In Rattus norvegicus (Rat), this protein is Transcription termination factor 2, mitochondrial (Mterf2).